An 84-amino-acid polypeptide reads, in one-letter code: Small ribosomal subunit protein uS17 (84 aa).

It belongs to the universal ribosomal protein uS17 family. Part of the 30S ribosomal subunit.

In terms of biological role, one of the primary rRNA binding proteins, it binds specifically to the 5'-end of 16S ribosomal RNA. The chain is Small ribosomal subunit protein uS17 from Aliivibrio fischeri (strain ATCC 700601 / ES114) (Vibrio fischeri).